The following is a 464-amino-acid chain: Soluble pyridine nucleotide transhydrogenase (464 aa).

D35–C44 is an FAD binding site.

It belongs to the class-I pyridine nucleotide-disulfide oxidoreductase family. FAD is required as a cofactor.

The protein resides in the cytoplasm. The enzyme catalyses NAD(+) + NADPH = NADH + NADP(+). Its function is as follows. Conversion of NADPH, generated by peripheral catabolic pathways, to NADH, which can enter the respiratory chain for energy generation. The protein is Soluble pyridine nucleotide transhydrogenase of Pseudomonas fluorescens (strain Pf0-1).